A 130-amino-acid chain; its full sequence is Phosphoribosyl-AMP cyclohydrolase (130 aa).

Asp77 contributes to the Mg(2+) binding site. Residue Cys78 coordinates Zn(2+). Residues Asp79 and Asp81 each contribute to the Mg(2+) site. Zn(2+)-binding residues include Cys95 and Cys102.

Belongs to the PRA-CH family. In terms of assembly, homodimer. Mg(2+) is required as a cofactor. The cofactor is Zn(2+).

Its subcellular location is the cytoplasm. It catalyses the reaction 1-(5-phospho-beta-D-ribosyl)-5'-AMP + H2O = 1-(5-phospho-beta-D-ribosyl)-5-[(5-phospho-beta-D-ribosylamino)methylideneamino]imidazole-4-carboxamide. Its pathway is amino-acid biosynthesis; L-histidine biosynthesis; L-histidine from 5-phospho-alpha-D-ribose 1-diphosphate: step 3/9. Functionally, catalyzes the hydrolysis of the adenine ring of phosphoribosyl-AMP. In Pseudomonas putida (strain ATCC 700007 / DSM 6899 / JCM 31910 / BCRC 17059 / LMG 24140 / F1), this protein is Phosphoribosyl-AMP cyclohydrolase.